Here is a 319-residue protein sequence, read N- to C-terminus: D-alanine--D-alanine ligase (319 aa).

The ATP-grasp domain occupies 120–315; it reads KRVLAQAGVP…YPELLRRLVE (196 aa). Position 147-198 (147-198) interacts with ATP; that stretch reads DPPFFVKPANTGSSVGISRVERFQDLEAALALAFRYDEKAVVEKALSPVREL. Mg(2+) contacts are provided by Asp-270, Glu-282, and Asn-284.

The protein belongs to the D-alanine--D-alanine ligase family. The cofactor is Mg(2+). Mn(2+) serves as cofactor.

The protein localises to the cytoplasm. The catalysed reaction is 2 D-alanine + ATP = D-alanyl-D-alanine + ADP + phosphate + H(+). The protein operates within cell wall biogenesis; peptidoglycan biosynthesis. Functionally, cell wall formation. This chain is D-alanine--D-alanine ligase, found in Thermus thermophilus (strain ATCC BAA-163 / DSM 7039 / HB27).